A 509-amino-acid polypeptide reads, in one-letter code: uncharacterized protein (509 aa).

A G domain is found at 108–225 (GKSSLCNLLA…KRHKPLFPVI (118 aa)).

This is an uncharacterized protein from Acinetobacter baylyi (strain ATCC 33305 / BD413 / ADP1).